Consider the following 343-residue polypeptide: Protein SOSEKI 4 (343 aa).

Positions 18 to 109 are DIX-like oligomerization domain; that stretch reads RIVPVVYYLS…YVLKGSQILD (92 aa). Residues 148 to 194 are disordered; it reads RKLSMDASTQTDDRRRRKSPVDEVNEVTELSREEITSPPQSDSSPET. A compositionally biased stretch (polar residues) spans 184-194; it reads SPPQSDSSPET. Residues 233 to 234 carry the Association to cell membranes motif; sequence CG.

The protein belongs to the SOSEKI family. In terms of assembly, homodimer. Forms long polymer filaments with other SOKs proteins polymers (e.g. SOK1, SOK2, SOK3 and SOK4) crucial for polar localization and biological activity. Binds to ANGUSTIFOLIA (AN). Expressed during embryogenesis and in roots.

Its subcellular location is the cell membrane. Its function is as follows. SOSEKI proteins (SOK1-5) locally interpret global polarity cues and can influence cell division orientation to coordinate cell polarization relative to body axes, probably by guiding ANGUSTIFOLIA (AN) polarized localization. Positive regulator of auxin (indole-3-acetic acid, IAA) biosynthesis and signaling pathway leading to the modulation of seedling growth, plant and inflorescence development. Negative regulator of stress responses (e.g. salinity and osmotic stress). In Arabidopsis thaliana (Mouse-ear cress), this protein is Protein SOSEKI 4.